We begin with the raw amino-acid sequence, 490 residues long: WD repeat-containing protein JIP5 (490 aa).

7 WD repeats span residues 23–64, 70–112, 118–155, 157–196, 242–284, 286–327, and 340–377; these read KYND…ERMQ, QKKK…GSCR, PIESSVGKHLFTVGKDHVVKKANTETGKVLTKTDISKD, SSKDAVTKLCHSTTHPFLLSGTENGHVLVYDSNDLSNKFK, DQED…LMDQ, SRIK…HRVN, and GTADEVGFLDIDYEYRLLTAGMDSMKLWSAEGDDEEEE. The disordered stretch occupies residues 368-490; that stretch reads SAEGDDEEEE…SHGIRRFDGL (123 aa). Acidic residues-rich tracts occupy residues 370–406 and 413–437; these read EGDDEEEEESEGEESEESEESDEESDESSGEESEGDD and EESDSNDEDEVESSDDEKEKEEEST. The span at 438–448 shows a compositional bias: basic and acidic residues; it reads ETDHKNIEAES. Positions 450–461 are enriched in polar residues; the sequence is KQANKRQASQPK. The segment covering 469-484 has biased composition (basic residues); that stretch reads KQKLKQTSKLAHSHGI.

Belongs to the WD repeat WDR55 family.

Its subcellular location is the nucleus. It localises to the nucleolus. The chain is WD repeat-containing protein JIP5 (JIP5) from Meyerozyma guilliermondii (strain ATCC 6260 / CBS 566 / DSM 6381 / JCM 1539 / NBRC 10279 / NRRL Y-324) (Yeast).